The following is a 313-amino-acid chain: Porphobilinogen deaminase (313 aa).

An S-(dipyrrolylmethanemethyl)cysteine modification is found at C242.

This sequence belongs to the HMBS family. Monomer. It depends on dipyrromethane as a cofactor.

It carries out the reaction 4 porphobilinogen + H2O = hydroxymethylbilane + 4 NH4(+). Its pathway is porphyrin-containing compound metabolism; protoporphyrin-IX biosynthesis; coproporphyrinogen-III from 5-aminolevulinate: step 2/4. In terms of biological role, tetrapolymerization of the monopyrrole PBG into the hydroxymethylbilane pre-uroporphyrinogen in several discrete steps. In Pseudomonas aeruginosa (strain LESB58), this protein is Porphobilinogen deaminase.